The primary structure comprises 287 residues: 4-hydroxybenzoate octaprenyltransferase (287 aa).

6 helical membrane-spanning segments follow: residues 23-40 (IGSL…WLAG), 98-118 (ILFV…NKMT), 141-161 (LPQF…YAAV), 163-183 (ESLP…TVAY), 213-233 (IIIG…GNIT), and 235-255 (LGIP…YQQI).

This sequence belongs to the UbiA prenyltransferase family. Mg(2+) is required as a cofactor.

It is found in the cell inner membrane. The catalysed reaction is all-trans-octaprenyl diphosphate + 4-hydroxybenzoate = 4-hydroxy-3-(all-trans-octaprenyl)benzoate + diphosphate. Its pathway is cofactor biosynthesis; ubiquinone biosynthesis. In terms of biological role, catalyzes the prenylation of para-hydroxybenzoate (PHB) with an all-trans polyprenyl group. Mediates the second step in the final reaction sequence of ubiquinone-8 (UQ-8) biosynthesis, which is the condensation of the polyisoprenoid side chain with PHB, generating the first membrane-bound Q intermediate 3-octaprenyl-4-hydroxybenzoate. This chain is 4-hydroxybenzoate octaprenyltransferase, found in Pectobacterium atrosepticum (strain SCRI 1043 / ATCC BAA-672) (Erwinia carotovora subsp. atroseptica).